The sequence spans 59 residues: UPF0434 protein Rsph17029_0141 (59 aa).

It belongs to the UPF0434 family.

The chain is UPF0434 protein Rsph17029_0141 from Cereibacter sphaeroides (strain ATCC 17029 / ATH 2.4.9) (Rhodobacter sphaeroides).